Reading from the N-terminus, the 236-residue chain is Peptidyl-prolyl cis-trans isomerase CYP21-4 (236 aa).

Residues 22–42 form a helical; Signal-anchor for type II membrane protein membrane-spanning segment; sequence ISISTIIVCNLVVAVVILSLV. The segment at 52-71 is disordered; sequence SRNTIEHETRSQRFEDTNTA. A compositionally biased stretch (basic and acidic residues) spans 54-67; it reads NTIEHETRSQRFED. Residues 82 to 232 form the PPIase cyclophilin-type domain; the sequence is FADINTSKGL…SPIGITGVVL (151 aa). Asn-86 carries an N-linked (GlcNAc...) asparagine glycan.

It belongs to the cyclophilin-type PPIase family. In terms of tissue distribution, ubiquitous.

Its subcellular location is the membrane. The catalysed reaction is [protein]-peptidylproline (omega=180) = [protein]-peptidylproline (omega=0). In terms of biological role, PPIases accelerate the folding of proteins. It catalyzes the cis-trans isomerization of proline imidic peptide bonds in oligopeptides. In Arabidopsis thaliana (Mouse-ear cress), this protein is Peptidyl-prolyl cis-trans isomerase CYP21-4 (CYP21-4).